The primary structure comprises 393 residues: S-adenosylmethionine synthase 3 (393 aa).

Glu43 lines the K(+) pocket. L-methionine is bound by residues Glu56 and Gln99. ATP is bound by residues 167 to 169, 235 to 238, Asp246, 252 to 253, Ala269, Lys273, and Lys277; these read DGK, SGRF, and RK. Asp246 contacts L-methionine. Lys277 contacts L-methionine.

The protein belongs to the AdoMet synthase family. Homotetramer. Requires Mn(2+) as cofactor. Mg(2+) is required as a cofactor. Co(2+) serves as cofactor. The cofactor is K(+).

It localises to the cytoplasm. The enzyme catalyses L-methionine + ATP + H2O = S-adenosyl-L-methionine + phosphate + diphosphate. It participates in amino-acid biosynthesis; S-adenosyl-L-methionine biosynthesis; S-adenosyl-L-methionine from L-methionine: step 1/1. Its function is as follows. Catalyzes the formation of S-adenosylmethionine from methionine and ATP. The reaction comprises two steps that are both catalyzed by the same enzyme: formation of S-adenosylmethionine (AdoMet) and triphosphate, and subsequent hydrolysis of the triphosphate. This chain is S-adenosylmethionine synthase 3 (SAM3), found in Actinidia chinensis var. chinensis (Chinese soft-hair kiwi).